Here is a 434-residue protein sequence, read N- to C-terminus: MQVSVEATQGLERRLTISVPAEQIEKLVKDSLQREAKRARIPGFRPGKVPVTVINKRYGAAIRQDITGEVMQRNFIEAIIAEKLNPAGAPTFIPGSTDSEKFEFVATFEIYPEVELKGLDAIEVEQPKASVTDADVDSMIETLRKQHATYAAVEREAADGDKVKMNFVGSVDGEEFEGGKAEDFELQLGSGRMIPGFEAGILGHKAGEEFVIDVNFPEEYHAENLKGKAAKFAITLTEVQAANLPEVNDEFAALFGISEGGLEALKTEIRKNMNRELEQALKANVKEQVIAGLLANNDIELPKALIDGEVNVLRQQAMQRFGGQTANMPELPAELFTEQAARRVKIGLLLGEVIKTNELKAEDERVQGLIASMASAYEDPSEVIAYYNSNKELMQNMRNVALEEQAVEALLKSAKVTEKEVAFEEFMNKATGRA.

The PPIase FKBP-type domain occupies glycine 160–proline 245.

The protein belongs to the FKBP-type PPIase family. Tig subfamily.

It is found in the cytoplasm. It carries out the reaction [protein]-peptidylproline (omega=180) = [protein]-peptidylproline (omega=0). Involved in protein export. Acts as a chaperone by maintaining the newly synthesized protein in an open conformation. Functions as a peptidyl-prolyl cis-trans isomerase. This chain is Trigger factor, found in Shewanella sp. (strain W3-18-1).